A 496-amino-acid chain; its full sequence is UDP-N-acetylmuramoyl-L-alanyl-D-glutamate--2,6-diaminopimelate ligase (496 aa).

Ser-32 provides a ligand contact to UDP-N-acetyl-alpha-D-muramoyl-L-alanyl-D-glutamate. 116–122 contributes to the ATP binding site; the sequence is GTNGKTT. UDP-N-acetyl-alpha-D-muramoyl-L-alanyl-D-glutamate contacts are provided by residues 158-159, Ser-185, Gln-191, and Arg-193; that span reads TT. N6-carboxylysine is present on Lys-225. Meso-2,6-diaminopimelate is bound by residues Arg-389, 413–416, Gly-464, and Glu-468; that span reads DNPR. The Meso-diaminopimelate recognition motif signature appears at 413–416; it reads DNPR.

The protein belongs to the MurCDEF family. MurE subfamily. Requires Mg(2+) as cofactor. In terms of processing, carboxylation is probably crucial for Mg(2+) binding and, consequently, for the gamma-phosphate positioning of ATP.

Its subcellular location is the cytoplasm. The catalysed reaction is UDP-N-acetyl-alpha-D-muramoyl-L-alanyl-D-glutamate + meso-2,6-diaminopimelate + ATP = UDP-N-acetyl-alpha-D-muramoyl-L-alanyl-gamma-D-glutamyl-meso-2,6-diaminopimelate + ADP + phosphate + H(+). The protein operates within cell wall biogenesis; peptidoglycan biosynthesis. Functionally, catalyzes the addition of meso-diaminopimelic acid to the nucleotide precursor UDP-N-acetylmuramoyl-L-alanyl-D-glutamate (UMAG) in the biosynthesis of bacterial cell-wall peptidoglycan. The protein is UDP-N-acetylmuramoyl-L-alanyl-D-glutamate--2,6-diaminopimelate ligase of Trichormus variabilis (strain ATCC 29413 / PCC 7937) (Anabaena variabilis).